The following is a 253-amino-acid chain: Imidazole glycerol phosphate synthase subunit HisF (253 aa).

Residues aspartate 13 and aspartate 132 contribute to the active site.

The protein belongs to the HisA/HisF family. As to quaternary structure, heterodimer of HisH and HisF.

The protein resides in the cytoplasm. It catalyses the reaction 5-[(5-phospho-1-deoxy-D-ribulos-1-ylimino)methylamino]-1-(5-phospho-beta-D-ribosyl)imidazole-4-carboxamide + L-glutamine = D-erythro-1-(imidazol-4-yl)glycerol 3-phosphate + 5-amino-1-(5-phospho-beta-D-ribosyl)imidazole-4-carboxamide + L-glutamate + H(+). Its pathway is amino-acid biosynthesis; L-histidine biosynthesis; L-histidine from 5-phospho-alpha-D-ribose 1-diphosphate: step 5/9. In terms of biological role, IGPS catalyzes the conversion of PRFAR and glutamine to IGP, AICAR and glutamate. The HisF subunit catalyzes the cyclization activity that produces IGP and AICAR from PRFAR using the ammonia provided by the HisH subunit. In Aliarcobacter butzleri (strain RM4018) (Arcobacter butzleri), this protein is Imidazole glycerol phosphate synthase subunit HisF.